The sequence spans 146 residues: Probable glycine cleavage system H protein 3 (146 aa).

One can recognise a Lipoyl-binding domain in the interval 29-111 (VVSVGMTDLG…PYGSWIIKVS (83 aa)). Lys71 is subject to N6-lipoyllysine.

Belongs to the GcvH family. As to quaternary structure, the glycine cleavage system is composed of four proteins: P, T, L and H. The cofactor is (R)-lipoate.

In terms of biological role, the glycine cleavage system catalyzes the degradation of glycine. The H protein shuttles the methylamine group of glycine from the P protein to the T protein. In Sulfolobus acidocaldarius (strain ATCC 33909 / DSM 639 / JCM 8929 / NBRC 15157 / NCIMB 11770), this protein is Probable glycine cleavage system H protein 3.